The chain runs to 606 residues: DNA mismatch repair protein MutL (606 aa).

The segment at 340–366 (MNAFRPGYSPSGLRPSPSATWSAATSP) is disordered. Over residues 353 to 366 (RPSPSATWSAATSP) the composition is skewed to low complexity.

This sequence belongs to the DNA mismatch repair MutL/HexB family.

This protein is involved in the repair of mismatches in DNA. It is required for dam-dependent methyl-directed DNA mismatch repair. May act as a 'molecular matchmaker', a protein that promotes the formation of a stable complex between two or more DNA-binding proteins in an ATP-dependent manner without itself being part of a final effector complex. In Agrobacterium fabrum (strain C58 / ATCC 33970) (Agrobacterium tumefaciens (strain C58)), this protein is DNA mismatch repair protein MutL.